The chain runs to 338 residues: Holliday junction branch migration complex subunit RuvB (338 aa).

Residues 1–181 (MEERILTQNF…FGVINRLDYY (181 aa)) form a large ATPase domain (RuvB-L) region. ATP contacts are provided by residues Leu20, Arg21, Gly62, Lys65, Thr66, Thr67, 128–130 (EDF), Arg171, Tyr181, and Arg218. Thr66 is a binding site for Mg(2+). The tract at residues 182–252 (SVEELKEIIK…TSKEALDVLG (71 aa)) is small ATPAse domain (RuvB-S). A head domain (RuvB-H) region spans residues 255 to 338 (EIGLEYIDRK…YIEQGRIEGV (84 aa)). Positions 310 and 315 each coordinate DNA.

The protein belongs to the RuvB family. As to quaternary structure, homohexamer. Forms an RuvA(8)-RuvB(12)-Holliday junction (HJ) complex. HJ DNA is sandwiched between 2 RuvA tetramers; dsDNA enters through RuvA and exits via RuvB. An RuvB hexamer assembles on each DNA strand where it exits the tetramer. Each RuvB hexamer is contacted by two RuvA subunits (via domain III) on 2 adjacent RuvB subunits; this complex drives branch migration. In the full resolvosome a probable DNA-RuvA(4)-RuvB(12)-RuvC(2) complex forms which resolves the HJ.

The protein resides in the cytoplasm. The enzyme catalyses ATP + H2O = ADP + phosphate + H(+). Its function is as follows. The RuvA-RuvB-RuvC complex processes Holliday junction (HJ) DNA during genetic recombination and DNA repair, while the RuvA-RuvB complex plays an important role in the rescue of blocked DNA replication forks via replication fork reversal (RFR). RuvA specifically binds to HJ cruciform DNA, conferring on it an open structure. The RuvB hexamer acts as an ATP-dependent pump, pulling dsDNA into and through the RuvAB complex. RuvB forms 2 homohexamers on either side of HJ DNA bound by 1 or 2 RuvA tetramers; 4 subunits per hexamer contact DNA at a time. Coordinated motions by a converter formed by DNA-disengaged RuvB subunits stimulates ATP hydrolysis and nucleotide exchange. Immobilization of the converter enables RuvB to convert the ATP-contained energy into a lever motion, pulling 2 nucleotides of DNA out of the RuvA tetramer per ATP hydrolyzed, thus driving DNA branch migration. The RuvB motors rotate together with the DNA substrate, which together with the progressing nucleotide cycle form the mechanistic basis for DNA recombination by continuous HJ branch migration. Branch migration allows RuvC to scan DNA until it finds its consensus sequence, where it cleaves and resolves cruciform DNA. This Thermoanaerobacter pseudethanolicus (strain ATCC 33223 / 39E) (Clostridium thermohydrosulfuricum) protein is Holliday junction branch migration complex subunit RuvB.